Consider the following 590-residue polypeptide: MSVGTLLNGLLVSIVAALLWKYSKLSEHAALLEEELHMTRQSQELSQAHIDYHVALQALQEHGTRMVCTGKMHTDRICRFDYLCYCSEAEEFVFFHSNSSVMLPNLGSRRFQPALLDLSSVEDHNTQYFNFLELPAATLRFMPKPVFVPDVTLILNRFNPDNLMHVFHDDLLPAFYTMKQFLDSDEDARLVFMEGWEEGPHFELYRLLSNKQPLLKEQLRNFGKLMCFTKSYIGLSKMTTWYQYGFVQPQGPKANILVSGNEIRHFAKVLMEKMNITRAAGGEKDQGNAEDEKPKDEYIVVFSRSTTRLILNEAELIMALAQEFQMRVVTVSLEEQSFPSIVQVISGASMLVSMHGAQLITSLFLPPGAVVVELYPFAVNPDQYTPYRTLASLPGMDLHYIPWRNTEEENTVTHPDRPWEQGGIAHLEKEEQEQIMASKDVPRHLCCRNPEWLFRIYQDTLVDIPSFLEVLQEGVKAKPLLKKSKLSSTLHPGRVRDPQCQTSVQTSNEAKLTVSWQIPWNLKYLKVREVKYEVWIQEQGENTYMPYILPQQNYTFSDNIKPFTTYLVWVRCIFNKNLLGPFADVLMCRT.

Over 1–4 (MSVG) the chain is Cytoplasmic. Residues 5 to 25 (TLLNGLLVSIVAALLWKYSKL) traverse the membrane as a helical; Signal-anchor for type II membrane protein segment. At 26 to 590 (SEHAALLEEE…PFADVLMCRT (565 aa)) the chain is on the lumenal side. N-linked (GlcNAc...) asparagine glycans are attached at residues N98, N275, and N553. The region spanning 494-590 (RVRDPQCQTS…PFADVLMCRT (97 aa)) is the Fibronectin type-III domain.

Belongs to the glycosyltransferase 61 family.

It localises to the endoplasmic reticulum membrane. It carries out the reaction 3-O-(alpha-D-mannosyl)-L-threonyl-[protein] + UDP-N-acetyl-alpha-D-glucosamine = 3-O-(N-acetyl-beta-D-glucosaminyl-(1-&gt;4)-alpha-D-mannosyl)-L-threonyl-[protein] + UDP + H(+). Its pathway is protein modification; protein glycosylation. O-linked mannose beta-1,4-N-acetylglucosaminyltransferase that transfers UDP-N-acetyl-D-glucosamine to the 4-position of the mannose to generate N-acetyl-D-glucosamine-beta-1,4-O-D-mannosylprotein. Involved in the biosynthesis of the phosphorylated O-mannosyl trisaccharide (N-acetylgalactosamine-beta-3-N-acetylglucosamine-beta-4-(phosphate-6-)mannose), a carbohydrate structure present in alpha-dystroglycan (DAG1), which is required for binding laminin G-like domain-containing extracellular proteins with high affinity. This chain is Protein O-linked-mannose beta-1,4-N-acetylglucosaminyltransferase 2 (pomgnt2), found in Takifugu rubripes (Japanese pufferfish).